A 1485-amino-acid polypeptide reads, in one-letter code: Dicer-like protein 2 (1485 aa).

Positions 1 to 11 (MSSQDESASSS) are enriched in low complexity. The interval 1–61 (MSSQDESASS…EPQPSGNGPR (61 aa)) is disordered. The 179-residue stretch at 72–250 (MFQASMQQNI…MEDLESSLDS (179 aa)) folds into the Helicase ATP-binding domain. ATP is bound at residue 85 to 92 (MDTGSGKT). Residues 193-196 (DEAH) carry the DEAH box motif. The 165-residue stretch at 415–579 (KLQVLLRILR…RYENDMRELD (165 aa)) folds into the Helicase C-terminal domain. In terms of domain architecture, Dicer dsRNA-binding fold spans 609 to 712 (AKGHLEHFCR…LPIRESDFVD (104 aa)). 2 RNase III domains span residues 988 to 1127 (AQEL…IEGG) and 1168 to 1358 (LGPL…VDSG). Positions 1208, 1344, and 1347 each coordinate Mg(2+). In terms of domain architecture, DRBM spans 1388 to 1469 (HPKEELGRVA…ALEVIRVWEE (82 aa)).

The protein belongs to the helicase family. Dicer subfamily. Mg(2+) is required as a cofactor. The cofactor is Mn(2+).

Functionally, dicer-like endonuclease involved in cleaving double-stranded RNA in the RNA interference (RNAi) pathway. Produces 21 to 25 bp dsRNAs (siRNAs) which target the selective destruction of homologous RNAs leading to sequence-specific suppression of gene expression, called post-transcriptional gene silencing (PTGS). Part of a broad host defense response against viral infection and transposons. This chain is Dicer-like protein 2 (DCL2), found in Pyricularia oryzae (strain 70-15 / ATCC MYA-4617 / FGSC 8958) (Rice blast fungus).